A 654-amino-acid chain; its full sequence is Tetratricopeptide repeat protein 30 homolog (654 aa).

7 TPR repeats span residues 10–43, 44–76, 143–176, 178–210, 384–417, 449–483, and 533–566; these read EGHV…ANTR, AGLS…APKE, ADTL…GGFN, LVAY…GVRN, LAAK…YLPV, AVWR…HSDD, and CIVN…GAGG.

Belongs to the TTC30/dfy-1/fleer family.

Its subcellular location is the cell projection. The protein localises to the cilium. Functionally, required for polyglutamylation of axonemal tubulin in sensory cilia. Plays a role in anterograde intraflagellar transport (IFT), the process by which cilia precursors are transported from the base of the cilium to the site of their incorporation at the tip. This chain is Tetratricopeptide repeat protein 30 homolog, found in Drosophila pseudoobscura pseudoobscura (Fruit fly).